Consider the following 298-residue polypeptide: uncharacterized protein (298 aa).

A disordered region spans residues 264–298; the sequence is APPPPLPCITTGPAALEDSPKASKANKGKKAKAKK. Positions 287 to 298 are enriched in basic residues; that stretch reads KANKGKKAKAKK.

This is an uncharacterized protein from Mus musculus (Mouse).